We begin with the raw amino-acid sequence, 237 residues long: tRNA1(Val) (adenine(37)-N6)-methyltransferase (237 aa).

Belongs to the methyltransferase superfamily. tRNA (adenine-N(6)-)-methyltransferase family.

It is found in the cytoplasm. The catalysed reaction is adenosine(37) in tRNA1(Val) + S-adenosyl-L-methionine = N(6)-methyladenosine(37) in tRNA1(Val) + S-adenosyl-L-homocysteine + H(+). Specifically methylates the adenine in position 37 of tRNA(1)(Val) (anticodon cmo5UAC). The polypeptide is tRNA1(Val) (adenine(37)-N6)-methyltransferase (Bacteroides fragilis (strain ATCC 25285 / DSM 2151 / CCUG 4856 / JCM 11019 / LMG 10263 / NCTC 9343 / Onslow / VPI 2553 / EN-2)).